We begin with the raw amino-acid sequence, 458 residues long: NADH-quinone oxidoreductase subunit N (458 aa).

The next 13 helical transmembrane spans lie at 3 to 23, 29 to 49, 64 to 84, 92 to 112, 147 to 167, 188 to 208, 222 to 242, 265 to 285, 291 to 311, 320 to 340, 358 to 378, 394 to 414, and 437 to 457; these read QYLF…LLFL, FGLI…TCTS, QNVK…AIAV, FSVL…SSTL, TLLG…IFVV, ILLF…HAWI, FFAV…ISNL, NILF…AFGQ, FIGF…SNSA, IAYA…VLML, VALA…FIGF, IPTA…YARI, and LLTS…VLLI.

The protein belongs to the complex I subunit 2 family. NDH-1 is composed of 14 different subunits. Subunits NuoA, H, J, K, L, M, N constitute the membrane sector of the complex.

Its subcellular location is the cell inner membrane. The catalysed reaction is a quinone + NADH + 5 H(+)(in) = a quinol + NAD(+) + 4 H(+)(out). Functionally, NDH-1 shuttles electrons from NADH, via FMN and iron-sulfur (Fe-S) centers, to quinones in the respiratory chain. The immediate electron acceptor for the enzyme in this species is believed to be ubiquinone. Couples the redox reaction to proton translocation (for every two electrons transferred, four hydrogen ions are translocated across the cytoplasmic membrane), and thus conserves the redox energy in a proton gradient. This chain is NADH-quinone oxidoreductase subunit N, found in Neorickettsia risticii (strain Illinois).